We begin with the raw amino-acid sequence, 142 residues long: 3-hydroxyacyl-[acyl-carrier-protein] dehydratase FabZ (142 aa).

Histidine 47 is an active-site residue.

It belongs to the thioester dehydratase family. FabZ subfamily.

It is found in the cytoplasm. The enzyme catalyses a (3R)-hydroxyacyl-[ACP] = a (2E)-enoyl-[ACP] + H2O. In terms of biological role, involved in unsaturated fatty acids biosynthesis. Catalyzes the dehydration of short chain beta-hydroxyacyl-ACPs and long chain saturated and unsaturated beta-hydroxyacyl-ACPs. The chain is 3-hydroxyacyl-[acyl-carrier-protein] dehydratase FabZ from Thermoanaerobacter pseudethanolicus (strain ATCC 33223 / 39E) (Clostridium thermohydrosulfuricum).